The following is a 1372-amino-acid chain: Putative Polyprotein CP (1372 aa).

Coiled-coil stretches lie at residues 126–153 (NKENLERQELLLRQINELKEEIKSLKNI) and 299–350 (EKQK…EELD). The interval 372-398 (SESSEINEISDNETEQISGSDSDYNNE) is disordered. Residues 386–398 (EQISGSDSDYNNE) show a composition bias toward polar residues. The segment at 739 to 756 (CKCYNCGEEGHISPNCKK) adopts a CCHC-type zinc-finger fold. Residues 1162–1189 (DDRTNIQREKDQIEKADHNLELQKELNN) adopt a coiled-coil conformation.

It localises to the virion. The protein is Putative Polyprotein CP of Cassava vein mosaic virus (CsVMV).